The sequence spans 87 residues: Cell division topological specificity factor (87 aa).

This sequence belongs to the MinE family.

Prevents the cell division inhibition by proteins MinC and MinD at internal division sites while permitting inhibition at polar sites. This ensures cell division at the proper site by restricting the formation of a division septum at the midpoint of the long axis of the cell. The polypeptide is Cell division topological specificity factor (Roseiflexus castenholzii (strain DSM 13941 / HLO8)).